The following is a 485-amino-acid chain: GlcNAc-binding protein A (485 aa).

Residues 1 to 23 form the signal peptide; that stretch reads MKKQPKMTAIALILSGISGLAYG. Residues 24 to 201 enclose the Chitin-binding type-4 domain; the sequence is HGYVSAVENG…SFYNVIDVKF (178 aa). A Chitin-binding type-3 domain is found at 437–478; it reads AGTKVLASDGAIYQCKPWPYSGYCQQWTSNATQYQPGTGSHW.

Belongs to the GbpA family.

It is found in the secreted. In terms of biological role, probably interacts with GlcNAc residues. May promote attachment to both epithelial cell surfaces and chitin. The chain is GlcNAc-binding protein A from Vibrio cholerae serotype O1 (strain ATCC 39541 / Classical Ogawa 395 / O395).